Reading from the N-terminus, the 328-residue chain is D-cysteine desulfhydrase (328 aa).

N6-(pyridoxal phosphate)lysine is present on Lys-51.

Belongs to the ACC deaminase/D-cysteine desulfhydrase family. Homodimer. The cofactor is pyridoxal 5'-phosphate.

The enzyme catalyses D-cysteine + H2O = hydrogen sulfide + pyruvate + NH4(+) + H(+). Functionally, catalyzes the alpha,beta-elimination reaction of D-cysteine and of several D-cysteine derivatives. It could be a defense mechanism against D-cysteine. The protein is D-cysteine desulfhydrase of Shigella sonnei (strain Ss046).